Reading from the N-terminus, the 336-residue chain is MKDRYILAFETSCDETSVAVLKNDDELLSNVIASQIESHKRFGGVVPEVASRHHVEVITACIEEALAEAGITEEDVTAVAVTYGPGLVGALLVGLSAAKAFAWAHGLPLIPVNHMAGHLMAAQSVEPLEFPLLALLVSGGHTELVYVSEAGDYKIVGETRDDAVGEAYDKVGRVMGLTYPAGREIDELAHQGQDIYDFPRAMIKEDNLEFSFSGLKSAFINLHHNAEQKGESLSTEDLCASFQAAVMDILMAKTKKALEKYPVKTLVVAGGVAANKGLRERLATEITDVNVIIPPLRLCGDNAGMIAYASVSEWNKENFANLDLNAKPSLAFDTME.

2 residues coordinate Fe cation: histidine 114 and histidine 118. Residues 136–140 (LVSGG), aspartate 169, glycine 182, aspartate 186, and asparagine 275 contribute to the substrate site. Aspartate 301 is a binding site for Fe cation.

Belongs to the KAE1 / TsaD family. It depends on Fe(2+) as a cofactor.

The protein localises to the cytoplasm. It carries out the reaction L-threonylcarbamoyladenylate + adenosine(37) in tRNA = N(6)-L-threonylcarbamoyladenosine(37) in tRNA + AMP + H(+). Its function is as follows. Required for the formation of a threonylcarbamoyl group on adenosine at position 37 (t(6)A37) in tRNAs that read codons beginning with adenine. Is involved in the transfer of the threonylcarbamoyl moiety of threonylcarbamoyl-AMP (TC-AMP) to the N6 group of A37, together with TsaE and TsaB. TsaD likely plays a direct catalytic role in this reaction. The polypeptide is tRNA N6-adenosine threonylcarbamoyltransferase (Streptococcus pneumoniae serotype 2 (strain D39 / NCTC 7466)).